Reading from the N-terminus, the 431-residue chain is DNA polymerase delta subunit 3 (431 aa).

The necessary for function, possibly resulting from its inability to interact with PolD2 stretch occupies residues 64 to 80 (QGSDSGEDLYSVVLESR). The interval 128-431 (PGAGKIVPSA…AGIMNFFSKK (304 aa)) is disordered. Over residues 156 to 171 (SKSAVKLEPSKSSLKS) the composition is skewed to low complexity. Basic and acidic residues-rich tracts occupy residues 172–200 (EPAK…EQAS) and 252–271 (SPPE…NKKE). Low complexity predominate over residues 278–290 (PSPTKKPTTANTS). Acidic residues predominate over residues 294 to 307 (FDEESAESSDEEEK). Basic and acidic residues-rich tracts occupy residues 308–328 (LDML…EKAS) and 343–362 (QPPK…KMDT). Over residues 387–411 (PANKKVSPKAAAPVNKKKSPPSAAK) the composition is skewed to low complexity.

In terms of assembly, component of both the DNA polymerase delta and DNA polymerase zeta complexes. The DNA polymerase delta complex consists of three subunits: the catalytic subunit PolD1 and two accessory subunits PolD2/Pol31 and PolD3/Pol32. Within the delta complex, interacts with both PolD1 and PolD2. Component of the DNA polymerase zeta complex consisting of four subunits: the catalytic subunit PolZ1 and three accessory subunits PolZ2/Rev7, PolD2/Pol31 and PolD3/Pol32. As to expression, expressed in ovaries (at the protein level). Expressed in ovaries.

The protein resides in the nucleus. The protein localises to the nucleoplasm. Accessory component of the DNA polymerase delta complex and possibly the DNA polymerase zeta complex. As a component of the delta complex, participates in high fidelity genome replication, including lagging strand synthesis, DNA recombination and repair. Required to recruit the DNA polymerase delta complex to the nucleus of rapidly dividing embryonic cells, and as a consequence is essential for genome replication during the earliest cell cycles. Increases the efficiency and processivity of DNA synthesis of the DNA polymerases during mitotic DNA replication and repair. During development this function is essential for preventing replication stress that results in the formation of chromosomal fragile sites (CFS) such as chromosomal breaks. Ensures genomic stability by promoting several types of DNA repair mechanisms including repairing broken dicentric chromosomes through homolog-dependent break-induced replication (BIR). During homologous recombination (HR) repair, required for maintaining the processivity of the delta complex during break-induced replication; a form of HR that requires extensive DNA synthesis such as the repair of large gaps. Able to suppress position effect variegation and may therefore have a role in the induction of chromatin state changes that likely include its activities in DNA replication and repair. This is DNA polymerase delta subunit 3 from Drosophila melanogaster (Fruit fly).